Here is an 89-residue protein sequence, read N- to C-terminus: Bombyxin B-1 (89 aa).

A signal peptide spans 1-19 (MKTSVMFMLVIVISLMCSG). 3 disulfides stabilise this stretch: Cys-29/Cys-75, Cys-41/Cys-88, and Cys-74/Cys-79. A propeptide spans 48–66 (GGAQYAPYFWTRQYLGSRG) (c peptide like).

It belongs to the insulin family. In terms of assembly, heterodimer of a B chain and an A chain linked by two disulfide bonds.

Its subcellular location is the secreted. Functionally, brain peptide responsible for activation of prothoracic glands to produce ecdysone in insects. This Bombyx mori (Silk moth) protein is Bombyxin B-1 (BBXB1).